Reading from the N-terminus, the 133-residue chain is MVNMFKHIKKSSNNSESWNKKEWQIAEELAVKYLKEKGYKILEKNFKTPYGEIDIIANKKDIIIFVEVKSGKGIRIQPSERVDDKKYLKIVKSAEFYLEFYLKNKNYKISQIDVIEIINGNIKHYENVGWDFT.

This sequence belongs to the UPF0102 family.

The chain is UPF0102 protein Fnod_1509 from Fervidobacterium nodosum (strain ATCC 35602 / DSM 5306 / Rt17-B1).